A 769-amino-acid polypeptide reads, in one-letter code: Serine protease HtrA-like (769 aa).

A compositionally biased stretch (basic residues) spans 1–20 (MDIGKKHVIPKSQYRRKRRE). Positions 1–390 (MDIGKKHVIP…ATSKLNKGRA (390 aa)) are disordered. Basic and acidic residues-rich tracts occupy residues 21 to 64 (FFHN…ERFK) and 71 to 108 (LEQR…DVSK). Polar residues predominate over residues 126-137 (YEQNSEATLSTK). Positions 138–186 (STDKVESSDMRKLSPDKNKVGHEEQHVLSKPSEHDKETRIDFESSRTDS) are enriched in basic and acidic residues. Polar residues-rich tracts occupy residues 202–221 (GNES…NTVP) and 247–262 (QQSQ…YGDS). Basic and acidic residues predominate over residues 264–295 (QNDKSNHENDLSHHTPSKSDDKDNVMREDHIV). A compositionally biased stretch (polar residues) spans 298–308 (NPDNDINTPSL). The segment covering 310-330 (KIDDDRKLDEKIHVEDKHKQN) has biased composition (basic and acidic residues). The span at 331–347 (ADSSETVGYQSQSSVSH) shows a compositional bias: polar residues. Residues 348 to 362 (RSTEKRNMAINDHHK) show a composition bias toward basic and acidic residues. The span at 366–390 (QKLNTKTSANNNQKKATSKLNKGRA) shows a compositional bias: polar residues. A helical membrane pass occupies residues 410–430 (LVILMGIIILIVILNAIFNNV). Residues H504, D534, and S619 each act as charge relay system in the active site. In terms of domain architecture, PDZ spans 680–733 (IASLNSFERQAVKLPGKVKNGVVVDQVDNNGLADQSSLKKGDVITELDGKLLED).

The protein belongs to the peptidase S1C family.

It localises to the cell membrane. In Staphylococcus aureus (strain bovine RF122 / ET3-1), this protein is Serine protease HtrA-like.